Reading from the N-terminus, the 500-residue chain is Probable lipoprotein aminopeptidase LpqL (500 aa).

Positions 1–24 (MVNKSRMMPAVLAVAVVVAFLTTG) are cleaved as a signal peptide. C25 carries N-palmitoyl cysteine lipidation. C25 carries S-diacylglycerol cysteine lipidation. The PA domain occupies 140 to 231 (VTGPLVAAPA…VTKSVGFQLR (92 aa)). Positions 271 and 283 each coordinate Zn(2+). E316 (proton acceptor) is an active-site residue. Zn(2+) contacts are provided by E317, D345, and H448.

It belongs to the peptidase M28 family. M28A subfamily. The cofactor is Zn(2+). Post-translationally, modified by Lgt on Cys-25 with an S-linked diacylglycerol with a mixture of C16 and C19 fatty acids (palmitic and tuberculostearic acid), signal peptide is removed by LspA, modified by Lnt with an amide-linked mixture of C16 and C19 fatty acids, expressed in M.bovis.

The protein resides in the cell membrane. It catalyses the reaction Release of an N-terminal amino acid, Xaa-|-Yaa-, in which Xaa is preferably Leu, but may be other amino acids including Pro although not Arg or Lys, and Yaa may be Pro. Amino acid amides and methyl esters are also readily hydrolyzed, but rates on arylamides are exceedingly low.. Functionally, an aminopeptidase; acts on free N-terminal amino groups with a very strong preference for Leu in the first position. The sequence is that of Probable lipoprotein aminopeptidase LpqL (lpqL) from Mycobacterium tuberculosis (strain ATCC 25618 / H37Rv).